A 150-amino-acid chain; its full sequence is UPF0178 protein PputGB1_5282 (150 aa).

The protein belongs to the UPF0178 family.

In Pseudomonas putida (strain GB-1), this protein is UPF0178 protein PputGB1_5282.